The primary structure comprises 113 residues: Large ribosomal subunit protein uL22 (113 aa).

It belongs to the universal ribosomal protein uL22 family. As to quaternary structure, part of the 50S ribosomal subunit.

In terms of biological role, this protein binds specifically to 23S rRNA; its binding is stimulated by other ribosomal proteins, e.g. L4, L17, and L20. It is important during the early stages of 50S assembly. It makes multiple contacts with different domains of the 23S rRNA in the assembled 50S subunit and ribosome. Its function is as follows. The globular domain of the protein is located near the polypeptide exit tunnel on the outside of the subunit, while an extended beta-hairpin is found that lines the wall of the exit tunnel in the center of the 70S ribosome. The chain is Large ribosomal subunit protein uL22 from Anoxybacillus flavithermus (strain DSM 21510 / WK1).